The primary structure comprises 848 residues: Neuroligin-3 (848 aa).

A signal peptide spans M1–T37. Residues Q38–S709 are Extracellular-facing. N-linked (GlcNAc...) asparagine glycosylation is present at N98. An intrachain disulfide couples C106 to C141. The tract at residues R170 to R195 is disordered. Positions D182–I194 are enriched in acidic residues. 2 disulfide bridges follow: C340–C351 and C510–C544. An N-linked (GlcNAc...) asparagine glycan is attached at N545. 2 stretches are compositionally biased toward polar residues: residues T645–S656 and A677–G689. The interval T645–G694 is disordered. The chain crosses the membrane as a helical span at residues V710 to Y730. Residues Y731–V848 are Cytoplasmic-facing. Residue S745 is modified to Phosphoserine. Y792 carries the phosphotyrosine modification.

The protein belongs to the type-B carboxylesterase/lipase family. As to quaternary structure, homodimer, and heterodimer with NLGN1 and NLGN2. Interacts with neurexins NRXN1, NRXN2 and NRXN3. Interaction with neurexins is mediated by heparan sulfate glycan modification on neurexin. Interacts (via its C-terminus) with DLG4/PSD-95 (via PDZ domain 3). As to expression, expressed in the blood vessel walls (at protein level). Detected in throughout the brain and in spinal cord. Detected in brain, and at lower levels in pancreas islet beta cells.

It is found in the cell membrane. Its subcellular location is the synapse. In terms of biological role, cell surface protein involved in cell-cell-interactions via its interactions with neurexin family members. Plays a role in synapse function and synaptic signal transmission, and may mediate its effects by clustering other synaptic proteins. May promote the initial formation of synapses, but is not essential for this. May also play a role in glia-glia or glia-neuron interactions in the developing peripheral nervous system. The protein is Neuroligin-3 (NLGN3) of Homo sapiens (Human).